Here is a 448-residue protein sequence, read N- to C-terminus: MSSAETMKQPTAASPDQFSVSHLLSAVESEISAGSEKGDPTERDLKITLEEKPLWDKFNALTNEMIVTKNGRRMFPVLKVNVSGLDPNAMYSFLLDFTAADNHRWKYVNGEWVPGGKPEPSVPSCVYIHPDSPNFGAHWMKSPVSFSKVKLTNKLNGGGQIMLNSLHKYEPRLHIIKVGGPDNQRMVSTHTFPETQFIAVTAYQNEEITALKIKYNPFAKAFLDAKERSDGKDGMEDLQDQPQYSQLGGWFLPGTGPICPPPNPHQFAPSLGLPSHGCDRYSTLRNHRSAPYPHPYQRSSPPTNYGHDTAASLPMMPTHDNWSGLPVSTHNMLSMSAMPHTTTSTHAQYPNLWSVSNNNLTPTTHAQTHMSGTMGTGLPHQFLRTTAPAPYHSIPTCTVPTTASSSPVYHDSHEVSSTDSGYGHSTTPPAPQTRITSNNWSPMTPPSL.

Residues 54 to 224 (LWDKFNALTN…YNPFAKAFLD (171 aa)) constitute a DNA-binding region (T-box). Disordered regions lie at residues 290 to 312 (APYP…TAAS) and 401 to 448 (TTAS…PPSL). Polar residues predominate over residues 417 to 442 (STDSGYGHSTTPPAPQTRITSNNWSP).

The protein localises to the nucleus. Involved in the transcriptional regulation of genes required for mesoderm formation and differentiation. This Branchiostoma floridae (Florida lancelet) protein is T-box transcription factor T homolog 1.